Consider the following 303-residue polypeptide: N-acetyl-D-glucosamine kinase (303 aa).

ATP-binding positions include 4 to 11 and 133 to 140; these read GFDIGGTK and GVGGGLIF. Residues His157, Cys177, Cys179, and Cys184 each coordinate Zn(2+).

This sequence belongs to the ROK (NagC/XylR) family. NagK subfamily.

The catalysed reaction is N-acetyl-D-glucosamine + ATP = N-acetyl-D-glucosamine 6-phosphate + ADP + H(+). It functions in the pathway cell wall biogenesis; peptidoglycan recycling. Functionally, catalyzes the phosphorylation of N-acetyl-D-glucosamine (GlcNAc) derived from cell-wall degradation, yielding GlcNAc-6-P. The protein is N-acetyl-D-glucosamine kinase of Shigella sonnei (strain Ss046).